The chain runs to 284 residues: 4-diphosphocytidyl-2-C-methyl-D-erythritol kinase (284 aa).

Lysine 14 is an active-site residue. Proline 98 to serine 108 provides a ligand contact to ATP. The active site involves aspartate 140.

The protein belongs to the GHMP kinase family. IspE subfamily.

It carries out the reaction 4-CDP-2-C-methyl-D-erythritol + ATP = 4-CDP-2-C-methyl-D-erythritol 2-phosphate + ADP + H(+). It participates in isoprenoid biosynthesis; isopentenyl diphosphate biosynthesis via DXP pathway; isopentenyl diphosphate from 1-deoxy-D-xylulose 5-phosphate: step 3/6. Functionally, catalyzes the phosphorylation of the position 2 hydroxy group of 4-diphosphocytidyl-2C-methyl-D-erythritol. This Shewanella sp. (strain MR-4) protein is 4-diphosphocytidyl-2-C-methyl-D-erythritol kinase.